A 916-amino-acid chain; its full sequence is MATLKPSFTVSPPNSNPIRFGSFPPQCFLRVPKPRRLILPRFRKTTGGGGGLIRCELPDFHLSATATTVSGVSTVNLVDQVQIPKGEMWSVHKFGGTCVGNSQRIRNVAEVIINDNSERKLVVVSAMSKVTDMMYDLIRKAQSRDDSYLSALEAVLEKHRLTARDLLDGDDLASFLSHLHNDISNLKAMLRAIYIAGHASESFSDFVAGHGELWSAQMLSYVVRKTGLECKWMDTRDVLIVNPTSSNQVDPDFGESEKRLDKWFSLNPSKIIIATGFIASTPQNIPTTLKRDGSDFSAAIMGALLRARQVTIWTDVDGVYSADPRKVNEAVILQTLSYQEAWEMSYFGANVLHPRTIIPVMRYNIPIVIRNIFNLSAPGTIICQPPEDDYDLKLTTPVKGFATIDNLALINVEGTGMAGVPGTASDIFGCVKDVGANVIMISQASSEHSVCFAVPEKEVNAVSEALRSRFSEALQAGRLSQIEVIPNCSILAAVGQKMASTPGVSCTLFSALAKANINVRAISQGCSEYNVTVVIKREDSVKALRAVHSRFFLSRTTLAMGIVGPGLIGATLLDQLRDQAAVLKQEFNIDLRVLGITGSKKMLLSDIGIDLSRWRELLNEKGTEADLDKFTQQVHGNHFIPNSVVVDCTADSAIASRYYDWLRKGIHVITPNKKANSGPLDQYLKLRDLQRKSYTHYFYEATVGAGLPIISTLRGLLETGDKILRIEGICSGTLSYLFNNFVGDRSFSEVVTEAKNAGFTEPDPRDDLSGTDVARKVIILARESGLKLDLADLPIRSLVPEPLKGCTSVEEFMEKLPQYDGDLAKERLDAENSGEVLRYVGVVDAVNQKGTVELRRYKKEHPFAQLAGSDNIIAFTTTRYKDHPLIVRGPGAGAQVTAGGIFSDILRLASYLGAPS.

A chloroplast-targeting transit peptide spans M1–E87. The interval M88–L336 is aspartokinase. The interface stretch occupies residues S337–I562. ACT domains follow at residues V412–N487 and A493–A570. Positions V563–S916 are homoserine dehydrogenase. I568 contacts NAD(+). Residues I568, K600, T649, and K673 each contribute to the NADP(+) site. I568 serves as a coordination point for NADPH. T649 contacts NAD(+). T649 and K673 together coordinate NADPH. E700, V703, A705, and L707 together coordinate Na(+). Residues G758 and E761 each coordinate NADP(+). The L-homoserine site is built by E761 and D772. Catalysis depends on K776, which acts as the Proton donor. G893 serves as a coordination point for NAD(+). G893 lines the NADP(+) pocket. Residue G893 participates in NADPH binding.

The protein in the N-terminal section; belongs to the aspartokinase family. In the C-terminal section; belongs to the homoserine dehydrogenase family. As to quaternary structure, homo- or heterodimer. A metal cation is required as a cofactor.

It localises to the plastid. Its subcellular location is the chloroplast. The catalysed reaction is L-homoserine + NADP(+) = L-aspartate 4-semialdehyde + NADPH + H(+). It catalyses the reaction L-homoserine + NAD(+) = L-aspartate 4-semialdehyde + NADH + H(+). The enzyme catalyses L-aspartate + ATP = 4-phospho-L-aspartate + ADP. Its pathway is amino-acid biosynthesis; L-lysine biosynthesis via DAP pathway; (S)-tetrahydrodipicolinate from L-aspartate: step 1/4. It functions in the pathway amino-acid biosynthesis; L-methionine biosynthesis via de novo pathway; L-homoserine from L-aspartate: step 1/3. It participates in amino-acid biosynthesis; L-methionine biosynthesis via de novo pathway; L-homoserine from L-aspartate: step 3/3. The protein operates within amino-acid biosynthesis; L-threonine biosynthesis; L-threonine from L-aspartate: step 1/5. Its pathway is amino-acid biosynthesis; L-threonine biosynthesis; L-threonine from L-aspartate: step 3/5. Its activity is regulated as follows. Threonine interaction with Gln-443 leads to inhibition of aspartate kinase activity and facilitates the binding of a second threonine on Gln-524, leading to a partial inhibition of homoserine dehydrogenase activity (25% of activity remaining at saturation with threonine). Homoserine dehydrogenase activity is also partially inhibited by cysteine (15% of activity remaining at saturation with cysteine). No synergy between threonine and cysteine for the inhibition. 13-fold activation of aspartate kinase activity by cysteine, isoleucine, valine, serine and alanine at 2.5 mM and 4-fold activation by leucine at 2.5 mM, but no activation of homoserine dehydrogenase activity. Functionally, bifunctional aspartate kinase and homoserine dehydrogenase that catalyzes the first and the third steps toward the synthesis of lysine, methionine and threonine from aspartate. The chain is Bifunctional aspartokinase/homoserine dehydrogenase 2, chloroplastic (AKHSDH2) from Arabidopsis thaliana (Mouse-ear cress).